A 317-amino-acid polypeptide reads, in one-letter code: DNA-directed RNA polymerase subunit alpha (317 aa).

Positions 1–230 (MIEIEMEKPK…EHLNLFITLT (230 aa)) are alpha N-terminal domain (alpha-NTD). Residues 247-317 (KEKVLEMTIE…LGLGLRPSDE (71 aa)) are alpha C-terminal domain (alpha-CTD).

It belongs to the RNA polymerase alpha chain family. In terms of assembly, homodimer. The RNAP catalytic core consists of 2 alpha, 1 beta, 1 beta' and 1 omega subunit. When a sigma factor is associated with the core the holoenzyme is formed, which can initiate transcription.

It carries out the reaction RNA(n) + a ribonucleoside 5'-triphosphate = RNA(n+1) + diphosphate. DNA-dependent RNA polymerase catalyzes the transcription of DNA into RNA using the four ribonucleoside triphosphates as substrates. This is DNA-directed RNA polymerase subunit alpha from Alkaliphilus oremlandii (strain OhILAs) (Clostridium oremlandii (strain OhILAs)).